The following is a 154-amino-acid chain: MQSNMQLEPNFWQTKSLLEMTESEWEALCDGCGKCCYRKYIQGRGKRQKLYYTRIACNLLDLETGKCGNYSERFNIETDCTKLTKKNLPDFHWLPDTCAYRLLYEGKTLPEWHPLISGSPHSVKNADILIKNGIHERDVIDWFEFIIDEDHTFK.

It belongs to the UPF0260 family.

The protein is UPF0260 protein HI_1355 of Haemophilus influenzae (strain ATCC 51907 / DSM 11121 / KW20 / Rd).